The chain runs to 93 residues: Pyrimidine/purine nucleoside phosphorylase (93 aa).

It belongs to the nucleoside phosphorylase PpnP family.

The catalysed reaction is a purine D-ribonucleoside + phosphate = a purine nucleobase + alpha-D-ribose 1-phosphate. It carries out the reaction adenosine + phosphate = alpha-D-ribose 1-phosphate + adenine. It catalyses the reaction cytidine + phosphate = cytosine + alpha-D-ribose 1-phosphate. The enzyme catalyses guanosine + phosphate = alpha-D-ribose 1-phosphate + guanine. The catalysed reaction is inosine + phosphate = alpha-D-ribose 1-phosphate + hypoxanthine. It carries out the reaction thymidine + phosphate = 2-deoxy-alpha-D-ribose 1-phosphate + thymine. It catalyses the reaction uridine + phosphate = alpha-D-ribose 1-phosphate + uracil. The enzyme catalyses xanthosine + phosphate = alpha-D-ribose 1-phosphate + xanthine. Its function is as follows. Catalyzes the phosphorolysis of diverse nucleosides, yielding D-ribose 1-phosphate and the respective free bases. Can use uridine, adenosine, guanosine, cytidine, thymidine, inosine and xanthosine as substrates. Also catalyzes the reverse reactions. The chain is Pyrimidine/purine nucleoside phosphorylase from Marinobacter nauticus (strain ATCC 700491 / DSM 11845 / VT8) (Marinobacter aquaeolei).